The following is a 597-amino-acid chain: Elongation factor 4 (597 aa).

The tr-type G domain maps to 2–184; the sequence is DHIRNFSIIA…SLIAKVPPPK (183 aa). GTP-binding positions include 14-19 and 131-134; these read DHGKST and NKID.

The protein belongs to the TRAFAC class translation factor GTPase superfamily. Classic translation factor GTPase family. LepA subfamily.

It localises to the cell inner membrane. The enzyme catalyses GTP + H2O = GDP + phosphate + H(+). Required for accurate and efficient protein synthesis under certain stress conditions. May act as a fidelity factor of the translation reaction, by catalyzing a one-codon backward translocation of tRNAs on improperly translocated ribosomes. Back-translocation proceeds from a post-translocation (POST) complex to a pre-translocation (PRE) complex, thus giving elongation factor G a second chance to translocate the tRNAs correctly. Binds to ribosomes in a GTP-dependent manner. This is Elongation factor 4 from Burkholderia cenocepacia (strain HI2424).